The sequence spans 131 residues: Small ribosomal subunit protein uS8 (131 aa).

This sequence belongs to the universal ribosomal protein uS8 family. In terms of assembly, part of the 30S ribosomal subunit. Contacts proteins S5 and S12.

One of the primary rRNA binding proteins, it binds directly to 16S rRNA central domain where it helps coordinate assembly of the platform of the 30S subunit. In Nitrosospira multiformis (strain ATCC 25196 / NCIMB 11849 / C 71), this protein is Small ribosomal subunit protein uS8.